Consider the following 155-residue polypeptide: Small ribosomal subunit protein uS7cz/uS7cy (155 aa).

This sequence belongs to the universal ribosomal protein uS7 family. In terms of assembly, part of the 30S ribosomal subunit.

It localises to the plastid. The protein resides in the chloroplast. One of the primary rRNA binding proteins, it binds directly to 16S rRNA where it nucleates assembly of the head domain of the 30S subunit. The polypeptide is Small ribosomal subunit protein uS7cz/uS7cy (rps7-A) (Lotus japonicus (Lotus corniculatus var. japonicus)).